Consider the following 383-residue polypeptide: Probable sphingolipid long chain base-responsive protein pil2 (383 aa).

The residue at position 162 (Ser-162) is a Phosphoserine. Disordered regions lie at residues 292-336 and 356-383; these read PRTD…EDYQ and GEED…PIAA. The segment covering 311-324 has biased composition (low complexity); sequence TTSGTTHSYTSTGS. Polar residues-rich tracts occupy residues 325-336 and 368-383; these read KRYSQMGTEDYQ and VAET…PIAA.

Phosphorylated by ksg1 and ppk21. Phosphorylation is regulated by sphingolipid long chain bases (LCBs).

In terms of biological role, negative regulator of cell wall integrity (CWI) in unstressed cells, probably by inhibiting protein kinase ksg1/ppk21 activity and regulating their downstream CWI pathways pck2-MAP kinase pathway and protein kinase gad8 pathway. Activity may be regulated by the transient increase of sphingolipid long chain bases (LCBs) during heat stress. The protein is Probable sphingolipid long chain base-responsive protein pil2 (pil2) of Schizosaccharomyces pombe (strain 972 / ATCC 24843) (Fission yeast).